A 426-amino-acid polypeptide reads, in one-letter code: Enolase (426 aa).

Gly41 is a binding site for phosphoenolpyruvate. Ser43 contacts Mg(2+). A phosphoenolpyruvate-binding site is contributed by Glu165. Positions 165 and 206 each coordinate (2R)-2-phosphoglycerate. Glu206 (proton donor) is an active-site residue. Asp243, Glu286, and Asp313 together coordinate Mg(2+). Phosphoenolpyruvate-binding residues include Asp313, Lys338, Arg367, Ser368, and Lys389. Residues Lys338, Arg367, and Ser368 each contribute to the (2R)-2-phosphoglycerate site. Lys338 serves as the catalytic Proton acceptor.

The protein belongs to the enolase family. In terms of assembly, homodimer. Requires Mg(2+) as cofactor.

It localises to the cytoplasm. The protein resides in the secreted. Its subcellular location is the cell surface. The enzyme catalyses (2R)-2-phosphoglycerate = phosphoenolpyruvate + H2O. The protein operates within carbohydrate degradation; glycolysis; pyruvate from D-glyceraldehyde 3-phosphate: step 4/5. In terms of biological role, catalyzes the reversible conversion of 2-phosphoglycerate (2-PG) into phosphoenolpyruvate (PEP). It is essential for the degradation of carbohydrates via glycolysis. The polypeptide is Enolase (Chloroflexus aurantiacus (strain ATCC 29366 / DSM 635 / J-10-fl)).